The chain runs to 221 residues: GTP-binding nuclear protein Ran-B1 (221 aa).

Residues 10–174 (DYPSFKLVIV…LYLARKLAGD (165 aa)) enclose the Small GTPase Ran-type domain. 21–28 (DGGTGKTT) serves as a coordination point for GTP. The segment at 40-48 (KKYEPTIGV) is switch-I. GTP is bound by residues Gly-71, 125–128 (NKVD), and 153–155 (SAK). The segment at 71–87 (GQEKFGGLRDGYYIHGQ) is switch-II.

This sequence belongs to the small GTPase superfamily. Ran family. Found in a nuclear export complex with RanGTP, exportin and pre-miRNA.

It is found in the nucleus. Its function is as follows. GTP-binding protein involved in nucleocytoplasmic transport. Required for the import of protein into the nucleus and also for RNA export. Involved in chromatin condensation and control of cell cycle. This Nicotiana tabacum (Common tobacco) protein is GTP-binding nuclear protein Ran-B1 (RAN-B1).